A 410-amino-acid chain; its full sequence is Cysteine desulfurase IscS (410 aa).

Pyridoxal 5'-phosphate-binding positions include 80-81, Asn-160, Gln-188, and 208-210; these read AT and SGH. An N6-(pyridoxal phosphate)lysine modification is found at Lys-211. Pyridoxal 5'-phosphate is bound at residue Thr-248. Cys-334 acts as the Cysteine persulfide intermediate in catalysis. Residue Cys-334 participates in [2Fe-2S] cluster binding.

Belongs to the class-V pyridoxal-phosphate-dependent aminotransferase family. NifS/IscS subfamily. In terms of assembly, homodimer. Forms a heterotetramer with IscU, interacts with other sulfur acceptors. Requires pyridoxal 5'-phosphate as cofactor.

The protein resides in the cytoplasm. The enzyme catalyses (sulfur carrier)-H + L-cysteine = (sulfur carrier)-SH + L-alanine. The protein operates within cofactor biosynthesis; iron-sulfur cluster biosynthesis. Functionally, master enzyme that delivers sulfur to a number of partners involved in Fe-S cluster assembly, tRNA modification or cofactor biosynthesis. Catalyzes the removal of elemental sulfur atoms from cysteine to produce alanine. Functions as a sulfur delivery protein for Fe-S cluster synthesis onto IscU, an Fe-S scaffold assembly protein, as well as other S acceptor proteins. The polypeptide is Cysteine desulfurase IscS (Rickettsia bellii (strain OSU 85-389)).